We begin with the raw amino-acid sequence, 362 residues long: S-adenosylmethionine decarboxylase proenzyme (362 aa).

Active-site residues include glutamate 13 and glutamate 16. Serine 73 serves as the catalytic Schiff-base intermediate with substrate; via pyruvic acid. Position 73 is a pyruvic acid (Ser); by autocatalysis (serine 73). Residue cysteine 87 is the Proton donor; for catalytic activity of the active site. Residues serine 236 and histidine 249 each act as proton acceptor; for processing activity in the active site.

It belongs to the eukaryotic AdoMetDC family. Requires pyruvate as cofactor. In terms of processing, is synthesized initially as an inactive proenzyme. Formation of the active enzyme involves a self-maturation process in which the active site pyruvoyl group is generated from an internal serine residue via an autocatalytic post-translational modification. Two non-identical subunits are generated from the proenzyme in this reaction, and the pyruvate is formed at the N-terminus of the alpha chain, which is derived from the carboxyl end of the proenzyme. The post-translation cleavage follows an unusual pathway, termed non-hydrolytic serinolysis, in which the side chain hydroxyl group of the serine supplies its oxygen atom to form the C-terminus of the beta chain, while the remainder of the serine residue undergoes an oxidative deamination to produce ammonia and the pyruvoyl group blocking the N-terminus of the alpha chain.

It catalyses the reaction S-adenosyl-L-methionine + H(+) = S-adenosyl 3-(methylsulfanyl)propylamine + CO2. It participates in amine and polyamine biosynthesis; S-adenosylmethioninamine biosynthesis; S-adenosylmethioninamine from S-adenosyl-L-methionine: step 1/1. This chain is S-adenosylmethionine decarboxylase proenzyme (SAMDC), found in Datura stramonium (Jimsonweed).